The chain runs to 139 residues: MLSPKRTKFRKQQRGRMRGLATGGNTINFGDFALQATEPCWITSRQIEAARRAMTRYIRRGGKIWIRVFPDKPVTQRAAETRMGSGKGSPEFWVAVVKPGFIMFEIAGVAEPVAREAMRLAAQKLPIKTKFITREEDFV.

The protein belongs to the universal ribosomal protein uL16 family. As to quaternary structure, part of the 50S ribosomal subunit.

Functionally, binds 23S rRNA and is also seen to make contacts with the A and possibly P site tRNAs. In Microcystis aeruginosa (strain NIES-843 / IAM M-2473), this protein is Large ribosomal subunit protein uL16.